The chain runs to 456 residues: Histidine--tRNA ligase (456 aa).

It belongs to the class-II aminoacyl-tRNA synthetase family. In terms of assembly, homodimer.

It is found in the cytoplasm. It carries out the reaction tRNA(His) + L-histidine + ATP = L-histidyl-tRNA(His) + AMP + diphosphate + H(+). The chain is Histidine--tRNA ligase from Cupriavidus taiwanensis (strain DSM 17343 / BCRC 17206 / CCUG 44338 / CIP 107171 / LMG 19424 / R1) (Ralstonia taiwanensis (strain LMG 19424)).